The chain runs to 1478 residues: DNA-directed RNA polymerase subunit beta' (1478 aa).

Residues Asp535, Asp537, and Asp539 each contribute to the Mg(2+) site. 4 residues coordinate Zn(2+): Cys1034, Cys1109, Cys1116, and Cys1119.

The protein belongs to the RNA polymerase beta' chain family. The RNAP catalytic core consists of 2 alpha, 1 beta, 1 beta' and 1 omega subunit. When a sigma factor is associated with the core the holoenzyme is formed, which can initiate transcription. Mg(2+) is required as a cofactor. Zn(2+) serves as cofactor.

It catalyses the reaction RNA(n) + a ribonucleoside 5'-triphosphate = RNA(n+1) + diphosphate. In terms of biological role, DNA-dependent RNA polymerase catalyzes the transcription of DNA into RNA using the four ribonucleoside triphosphates as substrates. This Mycoplasmopsis agalactiae (strain NCTC 10123 / CIP 59.7 / PG2) (Mycoplasma agalactiae) protein is DNA-directed RNA polymerase subunit beta'.